The chain runs to 119 residues: UPF0102 protein Nther_1376 (119 aa).

The protein belongs to the UPF0102 family.

The polypeptide is UPF0102 protein Nther_1376 (Natranaerobius thermophilus (strain ATCC BAA-1301 / DSM 18059 / JW/NM-WN-LF)).